The chain runs to 209 residues: Ribose 1,5-bisphosphate phosphokinase PhnN (209 aa).

An ATP-binding site is contributed by 27–34 (GPSGGGKD).

The protein belongs to the ribose 1,5-bisphosphokinase family.

The catalysed reaction is alpha-D-ribose 1,5-bisphosphate + ATP = 5-phospho-alpha-D-ribose 1-diphosphate + ADP. Its pathway is metabolic intermediate biosynthesis; 5-phospho-alpha-D-ribose 1-diphosphate biosynthesis; 5-phospho-alpha-D-ribose 1-diphosphate from D-ribose 5-phosphate (route II): step 3/3. Catalyzes the phosphorylation of ribose 1,5-bisphosphate to 5-phospho-D-ribosyl alpha-1-diphosphate (PRPP). This is Ribose 1,5-bisphosphate phosphokinase PhnN from Chelativorans sp. (strain BNC1).